Here is a 349-residue protein sequence, read N- to C-terminus: Isopentenyl-diphosphate delta-isomerase (349 aa).

Residue arginine 6–lysine 7 participates in substrate binding. FMN is bound by residues alanine 62 to threonine 64, serine 93, and asparagine 122. Glutamine 152 serves as a coordination point for substrate. Residue glutamate 153 coordinates Mg(2+). FMN contacts are provided by residues lysine 184, threonine 214, glycine 258–glycine 259, and alanine 280–glycine 281.

This sequence belongs to the IPP isomerase type 2 family. Homooctamer. Dimer of tetramers. FMN is required as a cofactor. The cofactor is NADPH. It depends on Mg(2+) as a cofactor.

It localises to the cytoplasm. It catalyses the reaction isopentenyl diphosphate = dimethylallyl diphosphate. Its function is as follows. Involved in the biosynthesis of isoprenoids. Catalyzes the 1,3-allylic rearrangement of the homoallylic substrate isopentenyl (IPP) to its allylic isomer, dimethylallyl diphosphate (DMAPP). The chain is Isopentenyl-diphosphate delta-isomerase from Bacillus cereus (strain 03BB102).